The chain runs to 213 residues: Ribosomal RNA small subunit methyltransferase G (213 aa).

S-adenosyl-L-methionine-binding positions include Gly75, Phe80, 128-129 (IE), and Arg144.

The protein belongs to the methyltransferase superfamily. RNA methyltransferase RsmG family.

The protein resides in the cytoplasm. It catalyses the reaction guanosine(527) in 16S rRNA + S-adenosyl-L-methionine = N(7)-methylguanosine(527) in 16S rRNA + S-adenosyl-L-homocysteine. Its function is as follows. Specifically methylates the N7 position of guanine in position 527 of 16S rRNA. This is Ribosomal RNA small subunit methyltransferase G from Brucella abortus (strain S19).